The following is a 446-amino-acid chain: NAD kinase (446 aa).

Residues Ser46, Ser48, Ser50, Ser55, and Ser64 each carry the phosphoserine modification.

Belongs to the NAD kinase family. A divalent metal cation serves as cofactor. In terms of tissue distribution, widely expressed but not detected in skeletal muscle.

The enzyme catalyses NAD(+) + ATP = ADP + NADP(+) + H(+). In Homo sapiens (Human), this protein is NAD kinase (NADK).